Consider the following 252-residue polypeptide: Chitooligosaccharide deacetylase (252 aa).

2 residues coordinate Mg(2+): histidine 61 and histidine 125.

It belongs to the YdjC deacetylase family. ChbG subfamily. In terms of assembly, homodimer. Mg(2+) serves as cofactor.

Its subcellular location is the cytoplasm. The catalysed reaction is N,N'-diacetylchitobiose + H2O = N-acetyl-beta-D-glucosaminyl-(1-&gt;4)-D-glucosamine + acetate. It carries out the reaction diacetylchitobiose-6'-phosphate + H2O = N'-monoacetylchitobiose-6'-phosphate + acetate. The protein operates within glycan degradation; chitin degradation. Involved in the degradation of chitin. ChbG is essential for growth on the acetylated chitooligosaccharides chitobiose and chitotriose but is dispensable for growth on cellobiose and chitosan dimer, the deacetylated form of chitobiose. Deacetylation of chitobiose-6-P and chitotriose-6-P is necessary for both the activation of the chb promoter by the regulatory protein ChbR and the hydrolysis of phosphorylated beta-glucosides by the phospho-beta-glucosidase ChbF. Catalyzes the removal of only one acetyl group from chitobiose-6-P to yield monoacetylchitobiose-6-P, the inducer of ChbR and the substrate of ChbF. The chain is Chitooligosaccharide deacetylase from Escherichia coli O6:H1 (strain CFT073 / ATCC 700928 / UPEC).